Here is a 499-residue protein sequence, read N- to C-terminus: MKLLEQIFEIAKKEPDLIVLAEREQKFTYRQLFAAVSHISEQINERNLNQRPILIFGKNDFITLAAMLATNLRGHAYIPVDAHTPFERTEMIKSAAKPAAVLTTVELSADFEALFTDRISLELTDQILTDKLPALDFSKAVSGNDSNYIIYTSGTTGVPKGVEVSHDNLVTFTNWMNNDFMKIENNQILSQALYSFDLSIFSLYPSLTTGGTLISLSRDETTNFKLLFERLNKTVINTWISTPSFVDICLLDPSFTEKEHPQLVQFILCGEELTKKTAEKLLTAFPSANIYNTYGPTEATGAISSVKITKELLTENDRVPIGFAKPGVDLKIMDKEIIIVGDSVAKGYFENPEKTEQAFFTVDGKPAYHTGDAGSISADGMLRYQGRIDFQVKFNGFRIELQDIEANIQNLKEIEKAVVLPKTNDQHKVTALIAYLETEKTFEDRAAERAFTKELKAELSKTIMDYMMPTKFVYLKKFPLNQNGKVDRKALAQKERGDN.

Residue 152 to 153 (TS) coordinates ATP. Aspartate 197 is a D-alanine binding site. ATP-binding positions include 292–297 (NTYGPT), aspartate 372, 384–387 (YQGR), and lysine 485. Lysine 485 contacts D-alanine.

This sequence belongs to the ATP-dependent AMP-binding enzyme family. DltA subfamily.

It is found in the cytoplasm. The enzyme catalyses holo-[D-alanyl-carrier protein] + D-alanine + ATP = D-alanyl-[D-alanyl-carrier protein] + AMP + diphosphate. The protein operates within cell wall biogenesis; lipoteichoic acid biosynthesis. Catalyzes the first step in the D-alanylation of lipoteichoic acid (LTA), the activation of D-alanine and its transfer onto the D-alanyl carrier protein (Dcp) DltC. In an ATP-dependent two-step reaction, forms a high energy D-alanyl-AMP intermediate, followed by transfer of the D-alanyl residue as a thiol ester to the phosphopantheinyl prosthetic group of the Dcp. D-alanylation of LTA plays an important role in modulating the properties of the cell wall in Gram-positive bacteria, influencing the net charge of the cell wall. The sequence is that of D-alanine--D-alanyl carrier protein ligase from Lactococcus lactis subsp. lactis (strain IL1403) (Streptococcus lactis).